The primary structure comprises 176 residues: COA8 family protein CG14806, mitochondrial (176 aa).

Residues 1–23 constitute a mitochondrion transit peptide; it reads MNKCFRCQPRISLFQFSLPRCYA.

Belongs to the COA8 family.

It is found in the mitochondrion inner membrane. May be required for cytochrome c complex (COX) assembly and function, COX being the terminal component of the mitochondrial respiratory chain. In terms of biological role, (Microbial infection) Required for optimal replication of E.chaffeensis. The sequence is that of COA8 family protein CG14806, mitochondrial from Drosophila melanogaster (Fruit fly).